The primary structure comprises 90 residues: MLGTLFGSAIGGALAVAGAPVALAAMGFTGTGIAAASIAAKMMSAAAIANGGGVAAGSLVATLQSAGVLGLSTSTNAILGAAGAAVGALL.

The signal sequence occupies residues 1-24 (MLGTLFGSAIGGALAVAGAPVALA). A run of 2 helical transmembrane segments spans residues 28 to 48 (FTGT…AAAI) and 67 to 89 (GVLG…VGAL).

It belongs to the IFI6/IFI27 family. As to quaternary structure, homodimer. Interacts with SKP2. Interacts with NR4A1. May interact with BCL2.

It is found in the nucleus inner membrane. In terms of biological role, may be involved in the interferon-induced negative regulation of the transcriptional activity of NR4A1, NR4A2 and NR4A3 through the enhancement of XPO1-mediated nuclear export of these nuclear receptors. Through the regulation of NR4A1 transcriptional activity, may play a role in the vascular response to injury. The polypeptide is Interferon alpha-inducible protein 27-like protein 2A (Mus musculus (Mouse)).